The chain runs to 521 residues: MKKLFLVIVPLLLSLLATSCSTSNVPPPTPLAEKPPKEAKVKVKWSRKTGNGNGGLPIYNVSPTYANNTVFVPNQNGVAYGLSITDGKIVWKHDTGTILSSQPNTIANAVIFGSVKGVLTAVDQKDGKILWRTDAPSSIFSQPTIYSNHLYTHTHDGSVTSFDATNGSKVWNVTNNIPEITLPSDSSPIILNDTVMVGSAFGTVLGFTLESGDRTINLPVAIAHGSSPADKMVDITANPMLYGNYLIFAAFQGAIVALDKDTGKMLWAKKASIINNMAINNGVIFTAQANSELKAYDIQTGDTVWTQSTLEWRKITAPIYYKGLIVVADYQGFLHFFNSLNGDYLGRYKLTPKSDFFDYGISGQLVPTEKGILIEADSGTTYLVDAHSDRVIYENILGDYKVNRGKNVKFIYPLEQPKSGSIESSPKALPDKKVDSNKTSKNDTDSNPATTATSTKDIQNPANQEMINSTPVSNTSTKAEKNENTDSSIAEGVVTSNKVQPTPKGKNATIIIGDFSKGDSD.

Positions 1–19 (MKKLFLVIVPLLLSLLATS) are cleaved as a signal peptide. The N-palmitoyl cysteine moiety is linked to residue Cys20. Cys20 is lipidated: S-diacylglycerol cysteine. Residues 418-521 (KSGSIESSPK…IGDFSKGDSD (104 aa)) form a disordered region. Residues 429 to 444 (LPDKKVDSNKTSKNDT) show a composition bias toward basic and acidic residues. The segment covering 445–477 (DSNPATTATSTKDIQNPANQEMINSTPVSNTST) has biased composition (polar residues).

Belongs to the BamB family. Part of the Bam complex.

The protein localises to the cell outer membrane. Part of the outer membrane protein assembly complex, which is involved in assembly and insertion of beta-barrel proteins into the outer membrane. This Francisella salina protein is Outer membrane protein assembly factor BamB.